Reading from the N-terminus, the 137-residue chain is FAD synthase (137 aa).

Residues Thr-5 to Phe-6, His-10 to His-13, and Asp-88 contribute to the ATP site.

It belongs to the archaeal FAD synthase family. Homodimer. A divalent metal cation is required as a cofactor.

The catalysed reaction is FMN + ATP + H(+) = FAD + diphosphate. It participates in cofactor biosynthesis; FAD biosynthesis; FAD from FMN: step 1/1. In terms of biological role, catalyzes the transfer of the AMP portion of ATP to flavin mononucleotide (FMN) to produce flavin adenine dinucleotide (FAD) coenzyme. The sequence is that of FAD synthase from Archaeoglobus fulgidus (strain ATCC 49558 / DSM 4304 / JCM 9628 / NBRC 100126 / VC-16).